The primary structure comprises 664 residues: Glycine--tRNA ligase beta subunit (664 aa).

It belongs to the class-II aminoacyl-tRNA synthetase family. As to quaternary structure, tetramer of two alpha and two beta subunits.

The protein localises to the cytoplasm. It catalyses the reaction tRNA(Gly) + glycine + ATP = glycyl-tRNA(Gly) + AMP + diphosphate. The sequence is that of Glycine--tRNA ligase beta subunit from Rickettsia africae (strain ESF-5).